Consider the following 637-residue polypeptide: DNA gyrase subunit B (637 aa).

In terms of domain architecture, Toprim spans 421-535 (SEIYIVEGDS…HGYVYIAQPP (115 aa)). Mg(2+)-binding residues include Glu-427, Asp-500, and Asp-502.

Belongs to the type II topoisomerase GyrB family. Heterotetramer, composed of two GyrA and two GyrB chains. In the heterotetramer, GyrA contains the active site tyrosine that forms a transient covalent intermediate with DNA, while GyrB binds cofactors and catalyzes ATP hydrolysis. Mg(2+) serves as cofactor. It depends on Mn(2+) as a cofactor. Requires Ca(2+) as cofactor.

It localises to the cytoplasm. It carries out the reaction ATP-dependent breakage, passage and rejoining of double-stranded DNA.. In terms of biological role, a type II topoisomerase that negatively supercoils closed circular double-stranded (ds) DNA in an ATP-dependent manner to modulate DNA topology and maintain chromosomes in an underwound state. Negative supercoiling favors strand separation, and DNA replication, transcription, recombination and repair, all of which involve strand separation. Also able to catalyze the interconversion of other topological isomers of dsDNA rings, including catenanes and knotted rings. Type II topoisomerases break and join 2 DNA strands simultaneously in an ATP-dependent manner. This chain is DNA gyrase subunit B, found in Halalkalibacterium halodurans (strain ATCC BAA-125 / DSM 18197 / FERM 7344 / JCM 9153 / C-125) (Bacillus halodurans).